A 256-amino-acid chain; its full sequence is Hydroxyacylglutathione hydrolase (256 aa).

The Zn(2+) site is built by H57, H59, D61, H62, H115, D134, and H172.

The protein belongs to the metallo-beta-lactamase superfamily. Glyoxalase II family. As to quaternary structure, monomer. It depends on Zn(2+) as a cofactor.

It carries out the reaction an S-(2-hydroxyacyl)glutathione + H2O = a 2-hydroxy carboxylate + glutathione + H(+). Its pathway is secondary metabolite metabolism; methylglyoxal degradation; (R)-lactate from methylglyoxal: step 2/2. Functionally, thiolesterase that catalyzes the hydrolysis of S-D-lactoyl-glutathione to form glutathione and D-lactic acid. This chain is Hydroxyacylglutathione hydrolase, found in Rhizobium johnstonii (strain DSM 114642 / LMG 32736 / 3841) (Rhizobium leguminosarum bv. viciae).